Reading from the N-terminus, the 86-residue chain is Photosystem I reaction center subunit PsaK (86 aa).

2 helical membrane-spanning segments follow: residues 15–35 and 57–77; these read SWSI…IGLG and GLPE…GAII.

It belongs to the PsaG/PsaK family.

The protein localises to the plastid. It localises to the chloroplast thylakoid membrane. This Gracilaria tenuistipitata var. liui (Red alga) protein is Photosystem I reaction center subunit PsaK.